A 371-amino-acid chain; its full sequence is uncharacterized protein (371 aa).

Residue 33-40 (GPLNSGKT) participates in ATP binding.

Belongs to the archaeal ATPase family.

This is an uncharacterized protein from Methanocaldococcus jannaschii (strain ATCC 43067 / DSM 2661 / JAL-1 / JCM 10045 / NBRC 100440) (Methanococcus jannaschii).